The chain runs to 227 residues: Ubiquitin domain-containing protein 1 (227 aa).

Positions 1 to 35 (MGNCVGRQRRERPAAPGHPRKRAGRNEPLKKERLK) are disordered. Over residues 24–35 (GRNEPLKKERLK) the composition is skewed to basic and acidic residues. Residues 149 to 224 (FPLKVRLSTG…IQVIINQPPP (76 aa)) enclose the Ubiquitin-like domain.

As to quaternary structure, interacts with UBTD1.

Its function is as follows. May be involved in the regulation of cellular senescence through a positive feedback loop with TP53. Is a TP53 downstream target gene that increases the stability of TP53 protein by promoting the ubiquitination and degradation of MDM2. This chain is Ubiquitin domain-containing protein 1 (Ubtd1), found in Rattus norvegicus (Rat).